The following is a 465-amino-acid chain: Fumarate hydratase class II (465 aa).

Substrate contacts are provided by residues 100–102 (SGT), 131–134 (HPND), 141–143 (SSN), and threonine 189. Histidine 190 serves as the catalytic Proton donor/acceptor. Serine 320 is a catalytic residue. Substrate contacts are provided by residues serine 321 and 326–328 (KVN).

The protein belongs to the class-II fumarase/aspartase family. Fumarase subfamily. Homotetramer.

The protein localises to the cytoplasm. The enzyme catalyses (S)-malate = fumarate + H2O. Its pathway is carbohydrate metabolism; tricarboxylic acid cycle; (S)-malate from fumarate: step 1/1. Functionally, involved in the TCA cycle. Catalyzes the stereospecific interconversion of fumarate to L-malate. The protein is Fumarate hydratase class II of Mesorhizobium japonicum (strain LMG 29417 / CECT 9101 / MAFF 303099) (Mesorhizobium loti (strain MAFF 303099)).